The primary structure comprises 788 residues: Cadherin-10 (788 aa).

Positions 1–22 (MTIHQFLLLFLFWVCLPHFCSP) are cleaved as a signal peptide. The propeptide occupies 23–54 (EIMFRRTPVPQQRILSSRVPRSDGKILHRQKR). 5 Cadherin domains span residues 55-160 (GWMW…EPTF), 161-269 (PEEI…PPRF), 270-384 (PQNT…PPVF), 385-487 (SRSS…DNAP), and 488-606 (QFAV…LLLP). Residues 55–613 (GWMWNQFFLL…LLPAGLSTGA (559 aa)) are Extracellular-facing. Asn-256 carries an N-linked (GlcNAc...) asparagine glycan. 3 N-linked (GlcNAc...) asparagine glycosylation sites follow: Asn-438, Asn-456, and Asn-534. A helical membrane pass occupies residues 614–634 (LIAILLCIIILLVIVVLFAAL). Residues 635–788 (KRQRKKEPLI…YGGGESDKDS (154 aa)) lie on the Cytoplasmic side of the membrane. Phosphoserine is present on residues Ser-784 and Ser-788.

As to expression, predominantly expressed in brain. Also found in adult and fetal kidney. Very low levels detected in prostate and fetal lung.

Its subcellular location is the cell membrane. Cadherins are calcium-dependent cell adhesion proteins. They preferentially interact with themselves in a homophilic manner in connecting cells; cadherins may thus contribute to the sorting of heterogeneous cell types. The polypeptide is Cadherin-10 (CDH10) (Homo sapiens (Human)).